A 967-amino-acid chain; its full sequence is Aminopeptidase N (967 aa).

At 1-8 the chain is on the cytoplasmic side; that stretch reads MAKGFYIS. Residues 9 to 32 form a helical; Signal-anchor for type II membrane protein membrane-spanning segment; it reads KPVGILAILLGVAAVCTIIALSVV. Residues 33–66 form a cytosolic Ser/Thr-rich junction region; the sequence is YSQEKNRSTESSTAASTAAPTGPTTTVATTLDQS. The Extracellular segment spans residues 33 to 967; it reads YSQEKNRSTE…VVLRWFTENS (935 aa). N-linked (GlcNAc...) asparagine glycosylation is present at asparagine 38. The segment at 41–61 is disordered; sequence TESSTAASTAAPTGPTTTVAT. A metalloprotease region spans residues 67 to 967; that stretch reads KPWNVYRLPK…VVLRWFTENS (901 aa). Asparagine 84 and asparagine 126 each carry an N-linked (GlcNAc...) asparagine glycan. At tyrosine 175 the chain carries Sulfotyrosine. N-linked (GlcNAc...) asparagine glycosylation is found at asparagine 233 and asparagine 338. 351–355 provides a ligand contact to substrate; that stretch reads GAMEN. Residue histidine 387 participates in Zn(2+) binding. Glutamate 388 (proton acceptor) is an active-site residue. Zn(2+) contacts are provided by histidine 391 and glutamate 410. Position 418 is a sulfotyrosine (tyrosine 418). 3 N-linked (GlcNAc...) asparagine glycosylation sites follow: asparagine 626, asparagine 682, and asparagine 740. Residues 670–840 form an interaction with FCoV and TGEV spike glycoprotein region; the sequence is ASAQKVPVTL…GALACSNQVW (171 aa). 2 disulfide bridges follow: cysteine 762–cysteine 769 and cysteine 799–cysteine 835.

It belongs to the peptidase M1 family. In terms of assembly, homodimer. Interacts with SLC6A19. (Microbial infection) Interacts with FCoV, CCoV, TGEV and HCoV-229E spike glycoprotein. Requires Zn(2+) as cofactor. In terms of processing, sulfated. Post-translationally, N- and O-glycosylated. May undergo proteolysis and give rise to a soluble form.

It is found in the cell membrane. The catalysed reaction is Release of an N-terminal amino acid, Xaa-|-Yaa- from a peptide, amide or arylamide. Xaa is preferably Ala, but may be most amino acids including Pro (slow action). When a terminal hydrophobic residue is followed by a prolyl residue, the two may be released as an intact Xaa-Pro dipeptide.. Broad specificity aminopeptidase which plays a role in the final digestion of peptides generated from hydrolysis of proteins by gastric and pancreatic proteases. Also involved in the processing of various peptides including peptide hormones, such as angiotensin III and IV, neuropeptides, and chemokines. May also be involved the cleavage of peptides bound to major histocompatibility complex class II molecules of antigen presenting cells. May have a role in angiogenesis and promote cholesterol crystallization. May have a role in amino acid transport by acting as binding partner of amino acid transporter SLC6A19 and regulating its activity. Its function is as follows. (Microbial infection) In case of feline coronavirus (FCoV) infection, serves as a receptor for FCoV spike glycoprotein. It is as well a receptor for other serogroup I coronaviruses, like canine coronavirus (CCoV), porcine transmissible gastroenteritis virus (TGEV), and human coronavirus 229E (HCoV-229E). Also serves as a receptor for infectious bronchitis virus (IBV, Arkansas 99 serotype) in serogroup III. The protein is Aminopeptidase N (ANPEP) of Felis catus (Cat).